Consider the following 460-residue polypeptide: GTPase Der (460 aa).

EngA-type G domains follow at residues 2-164 (QSII…HEEF) and 196-368 (IRVG…ENFT). GTP contacts are provided by residues 8–15 (GKPNVGKS), 55–59 (DSGGL), 116–119 (NKVD), 202–209 (GRVNVGKS), 249–253 (DTAGI), and 313–316 (NKWD). The KH-like domain maps to 369–453 (QKIQTSKLNT…PLVIASRKKG (85 aa)).

The protein belongs to the TRAFAC class TrmE-Era-EngA-EngB-Septin-like GTPase superfamily. EngA (Der) GTPase family. Associates with the 50S ribosomal subunit.

GTPase that plays an essential role in the late steps of ribosome biogenesis. In Campylobacter jejuni subsp. jejuni serotype O:23/36 (strain 81-176), this protein is GTPase Der.